We begin with the raw amino-acid sequence, 82 residues long: Small ribosomal subunit protein uS17c (82 aa).

Belongs to the universal ribosomal protein uS17 family. Part of the 30S ribosomal subunit.

The protein localises to the plastid. It localises to the chloroplast. One of the primary rRNA binding proteins, it binds specifically to the 5'-end of 16S ribosomal RNA. The sequence is that of Small ribosomal subunit protein uS17c (rps17) from Emiliania huxleyi (Coccolithophore).